We begin with the raw amino-acid sequence, 403 residues long: S-adenosylmethionine:tRNA ribosyltransferase-isomerase (403 aa).

Belongs to the QueA family. In terms of assembly, monomer.

It is found in the cytoplasm. It catalyses the reaction 7-aminomethyl-7-carbaguanosine(34) in tRNA + S-adenosyl-L-methionine = epoxyqueuosine(34) in tRNA + adenine + L-methionine + 2 H(+). It participates in tRNA modification; tRNA-queuosine biosynthesis. Functionally, transfers and isomerizes the ribose moiety from AdoMet to the 7-aminomethyl group of 7-deazaguanine (preQ1-tRNA) to give epoxyqueuosine (oQ-tRNA). The sequence is that of S-adenosylmethionine:tRNA ribosyltransferase-isomerase from Psychrobacter arcticus (strain DSM 17307 / VKM B-2377 / 273-4).